The primary structure comprises 462 residues: Elongation factor 1-alpha (462 aa).

A Blocked amino end (Gly) modification is found at glycine 2. In terms of domain architecture, tr-type G spans 5-242; the sequence is KIHINIVVIG…DAILPPSRPT (238 aa). A G1 region spans residues 14 to 21; sequence GHVDSGKS. GTP is bound at residue 14–21; the sequence is GHVDSGKS. Lysine 36 is modified (N6,N6,N6-trimethyllysine). Lysine 55 is subject to N6-methyllysine. Residues 70-74 are G2; it reads GITID. Lysine 79 carries the N6,N6,N6-trimethyllysine modification. Residues 91–94 are G3; the sequence is DAPG. Residues 91-95 and 153-156 contribute to the GTP site; these read DAPGH and NKMD. The tract at residues 153 to 156 is G4; it reads NKMD. A G5 region spans residues 194–196; that stretch reads SGW. 2 positions are modified to N6,N6,N6-trimethyllysine: lysine 219 and lysine 318. 5-glutamyl glycerylphosphorylethanolamine is present on glutamate 374.

The protein belongs to the TRAFAC class translation factor GTPase superfamily. Classic translation factor GTPase family. EF-Tu/EF-1A subfamily. The N-terminus is blocked.

Its subcellular location is the cytoplasm. Functionally, this protein promotes the GTP-dependent binding of aminoacyl-tRNA to the A-site of ribosomes during protein biosynthesis. This is Elongation factor 1-alpha from Artemia salina (Brine shrimp).